We begin with the raw amino-acid sequence, 229 residues long: DNA repair protein RecO (229 aa).

This sequence belongs to the RecO family.

Involved in DNA repair and RecF pathway recombination. This Legionella pneumophila (strain Corby) protein is DNA repair protein RecO.